The chain runs to 588 residues: Aspartate--tRNA(Asp/Asn) ligase (588 aa).

Position 172 (E172) interacts with L-aspartate. The segment at 196 to 199 (QLFK) is aspartate. R218 is an L-aspartate binding site. ATP contacts are provided by residues 218 to 220 (RDE) and Q227. Position 450 (H450) interacts with L-aspartate. E484 contacts ATP. Position 491 (R491) interacts with L-aspartate. 536–539 (GLDR) lines the ATP pocket.

The protein belongs to the class-II aminoacyl-tRNA synthetase family. Type 1 subfamily. In terms of assembly, homodimer.

The protein resides in the cytoplasm. The enzyme catalyses tRNA(Asx) + L-aspartate + ATP = L-aspartyl-tRNA(Asx) + AMP + diphosphate. Aspartyl-tRNA synthetase with relaxed tRNA specificity since it is able to aspartylate not only its cognate tRNA(Asp) but also tRNA(Asn). Reaction proceeds in two steps: L-aspartate is first activated by ATP to form Asp-AMP and then transferred to the acceptor end of tRNA(Asp/Asn). This chain is Aspartate--tRNA(Asp/Asn) ligase, found in Nitrosospira multiformis (strain ATCC 25196 / NCIMB 11849 / C 71).